We begin with the raw amino-acid sequence, 615 residues long: Leucine aminopeptidase 2-1 (615 aa).

Substrate is bound by residues 137-139 (QCQ) and 261-266 (PYGGME). His-290 is a binding site for Zn(2+). Glu-291 (proton acceptor) is an active-site residue. Zn(2+)-binding residues include His-294 and Glu-313. The Proton donor role is filled by Tyr-380.

Belongs to the peptidase M1 family. The cofactor is Zn(2+).

It is found in the cytoplasm. Its subcellular location is the nucleus. It carries out the reaction an epoxide + H2O = an ethanediol. Aminopeptidase that preferentially cleaves di- and tripeptides. Also has low epoxide hydrolase activity (in vitro). Can hydrolyze the epoxide leukotriene LTA(4) but it forms preferentially 5,6-dihydroxy-7,9,11,14-eicosatetraenoic acid rather than the cytokine leukotriene B(4) as the product compared to the homologous mammalian enzyme (in vitro). The sequence is that of Leucine aminopeptidase 2-1 from Meyerozyma guilliermondii (strain ATCC 6260 / CBS 566 / DSM 6381 / JCM 1539 / NBRC 10279 / NRRL Y-324) (Yeast).